The following is a 72-amino-acid chain: Translation initiation factor IF-1 (72 aa).

Residues 1–72 (MAKEESIKMN…SKGRITYRAR (72 aa)) form the S1-like domain.

The protein belongs to the IF-1 family. Component of the 30S ribosomal translation pre-initiation complex which assembles on the 30S ribosome in the order IF-2 and IF-3, IF-1 and N-formylmethionyl-tRNA(fMet); mRNA recruitment can occur at any time during PIC assembly.

It is found in the cytoplasm. One of the essential components for the initiation of protein synthesis. Stabilizes the binding of IF-2 and IF-3 on the 30S subunit to which N-formylmethionyl-tRNA(fMet) subsequently binds. Helps modulate mRNA selection, yielding the 30S pre-initiation complex (PIC). Upon addition of the 50S ribosomal subunit IF-1, IF-2 and IF-3 are released leaving the mature 70S translation initiation complex. The sequence is that of Translation initiation factor IF-1 from Alkalilimnicola ehrlichii (strain ATCC BAA-1101 / DSM 17681 / MLHE-1).